A 211-amino-acid polypeptide reads, in one-letter code: Uridine kinase (211 aa).

12–19 (GGSGSGKT) provides a ligand contact to ATP.

This sequence belongs to the uridine kinase family.

The protein localises to the cytoplasm. It catalyses the reaction uridine + ATP = UMP + ADP + H(+). The catalysed reaction is cytidine + ATP = CMP + ADP + H(+). The protein operates within pyrimidine metabolism; CTP biosynthesis via salvage pathway; CTP from cytidine: step 1/3. It participates in pyrimidine metabolism; UMP biosynthesis via salvage pathway; UMP from uridine: step 1/1. This Bacillus licheniformis (strain ATCC 14580 / DSM 13 / JCM 2505 / CCUG 7422 / NBRC 12200 / NCIMB 9375 / NCTC 10341 / NRRL NRS-1264 / Gibson 46) protein is Uridine kinase.